We begin with the raw amino-acid sequence, 136 residues long: Large ribosomal subunit protein uL16c (136 aa).

The protein belongs to the universal ribosomal protein uL16 family. In terms of assembly, part of the 50S ribosomal subunit.

The protein localises to the plastid. It localises to the chloroplast. In Buxus microphylla (Littleleaf boxwood), this protein is Large ribosomal subunit protein uL16c.